Reading from the N-terminus, the 177-residue chain is Outer membrane lipoprotein Blc (177 aa).

The signal sequence occupies residues 1-18 (MRLLPLVAAATAAFLVVA). C19 is lipidated: N-palmitoyl cysteine. A lipid anchor (S-diacylglycerol cysteine) is attached at C19.

It belongs to the calycin superfamily. Lipocalin family. As to quaternary structure, homodimer.

It localises to the cell outer membrane. Involved in the storage or transport of lipids necessary for membrane maintenance under stressful conditions. Displays a binding preference for lysophospholipids. This chain is Outer membrane lipoprotein Blc (blc), found in Escherichia coli O157:H7.